A 437-amino-acid chain; its full sequence is Cysteine--tRNA ligase (437 aa).

Residue cysteine 31 coordinates Zn(2+). A 'HIGH' region motif is present at residues 33 to 43 (PTVYNDLHLGN). Residues cysteine 205, histidine 230, and glutamate 234 each coordinate Zn(2+). The 'KMSKS' region motif lies at 262–266 (KMSKS). Lysine 265 is a binding site for ATP.

The protein belongs to the class-I aminoacyl-tRNA synthetase family. In terms of assembly, monomer. The cofactor is Zn(2+).

The protein resides in the cytoplasm. The enzyme catalyses tRNA(Cys) + L-cysteine + ATP = L-cysteinyl-tRNA(Cys) + AMP + diphosphate. This chain is Cysteine--tRNA ligase (cysS), found in Mycoplasma pneumoniae (strain ATCC 29342 / M129 / Subtype 1) (Mycoplasmoides pneumoniae).